Consider the following 390-residue polypeptide: Pepsin B (390 aa).

Residues 1–16 form the signal peptide; it reads MKIQVLVLVCLHLSEG. Residues 17-59 constitute a propeptide, activation peptide; it reads VERIILKKGKSIRQVMEERGVLETFLRNHPKVDPAAKYLFNND. The Peptidase A1 domain occupies 74 to 387; sequence YFGEISIGTP…DMAANRVGFA (314 aa). The active site involves Asp-92. Cystine bridges form between Cys-105/Cys-110 and Cys-269/Cys-273. Asp-278 is an active-site residue. A disulfide bridge links Cys-312 with Cys-345.

It belongs to the peptidase A1 family.

The protein localises to the secreted. The enzyme catalyses Degradation of gelatin, little activity on hemoglobin. Specificity on B chain of insulin more restricted than that of pepsin A. Does not cleave 1-Phe-|-Val-2, 4-Gln-|-His-5 or 23-Gly-|-Phe-24.. Functionally, hydrolyzes various peptides including beta-endorphin, insulin B chain, dynorphin A, and neurokinin A, with high specificity for the cleavage of the Phe-Xaa bonds. This Canis lupus familiaris (Dog) protein is Pepsin B (PGB).